A 373-amino-acid chain; its full sequence is Arabinonate dehydratase (373 aa).

Positions 199, 225, and 251 each coordinate Mg(2+).

This sequence belongs to the mandelate racemase/muconate lactonizing enzyme family. Homooctamer. The cofactor is Mg(2+).

The catalysed reaction is D-arabinonate = 2-dehydro-3-deoxy-D-arabinonate + H2O. With respect to regulation, inhibited by substrate levels above 8 mM. Catalyzes the dehydration of D-arabinonate to 2-keto-3-deoxy-D-arabinonate. Participates in a pentose oxidation pathway that converts D-arabinonate to 2-oxoglutarate. The protein is Arabinonate dehydratase of Saccharolobus solfataricus (strain ATCC 35092 / DSM 1617 / JCM 11322 / P2) (Sulfolobus solfataricus).